The sequence spans 677 residues: Methionine--tRNA ligase (677 aa).

The short motif at 14–24 is the 'HIGH' region element; that stretch reads PYANGSIHLGH. The Zn(2+) site is built by Cys-145, Cys-148, Cys-158, and Cys-161. The short motif at 331 to 335 is the 'KMSKS' region element; sequence KMSKS. Lys-334 provides a ligand contact to ATP. One can recognise a tRNA-binding domain in the interval 575 to 677; the sequence is AFAAVDLRIA…SGAKPGQRVK (103 aa).

It belongs to the class-I aminoacyl-tRNA synthetase family. MetG type 1 subfamily. Homodimer. The cofactor is Zn(2+).

The protein localises to the cytoplasm. The catalysed reaction is tRNA(Met) + L-methionine + ATP = L-methionyl-tRNA(Met) + AMP + diphosphate. Functionally, is required not only for elongation of protein synthesis but also for the initiation of all mRNA translation through initiator tRNA(fMet) aminoacylation. The chain is Methionine--tRNA ligase from Pseudomonas aeruginosa (strain LESB58).